The following is a 432-amino-acid chain: Peptidase B (432 aa).

Positions 196 and 201 each coordinate Mn(2+). The active site involves lysine 208. Aspartate 219, aspartate 278, and glutamate 280 together coordinate Mn(2+). Arginine 282 is a catalytic residue.

It belongs to the peptidase M17 family. As to quaternary structure, homohexamer. Mn(2+) is required as a cofactor.

The protein localises to the cytoplasm. It carries out the reaction Release of an N-terminal amino acid, Xaa, from a peptide or arylamide. Xaa is preferably Glu or Asp but may be other amino acids, including Leu, Met, His, Cys and Gln.. Functionally, probably plays an important role in intracellular peptide degradation. In Vibrio vulnificus (strain CMCP6), this protein is Peptidase B.